The sequence spans 286 residues: ATP synthase gamma chain (286 aa).

This sequence belongs to the ATPase gamma chain family. In terms of assembly, F-type ATPases have 2 components, CF(1) - the catalytic core - and CF(0) - the membrane proton channel. CF(1) has five subunits: alpha(3), beta(3), gamma(1), delta(1), epsilon(1). CF(0) has three main subunits: a, b and c.

Its subcellular location is the cell inner membrane. Produces ATP from ADP in the presence of a proton gradient across the membrane. The gamma chain is believed to be important in regulating ATPase activity and the flow of protons through the CF(0) complex. The polypeptide is ATP synthase gamma chain (Pseudoalteromonas translucida (strain TAC 125)).